We begin with the raw amino-acid sequence, 863 residues long: Oleate activated transcription factor 3 (863 aa).

The segment at residues 19–47 (CTNCKKRKSKCDRTKPCGTCVRLGDVDSC) is a DNA-binding region (zn(2)-C6 fungal-type). The segment covering 52-63 (DSSGQPESSPSL) has biased composition (polar residues). The tract at residues 52 to 99 (DSSGQPESSPSLNDADPLRKQSTPAERISPGFIKKRRSSQTRQDEDHW) is disordered.

This sequence belongs to the OAF3 family.

The protein resides in the cytoplasm. The protein localises to the nucleus. Its subcellular location is the mitochondrion. Transcriptional inhibitor with a significantly increased number of target genes in response to oleate. This is Oleate activated transcription factor 3 (OAF3) from Saccharomyces cerevisiae (strain YJM789) (Baker's yeast).